Consider the following 319-residue polypeptide: MQLVQLLPPGVSLLALVWLAVDAAFLTALLLYLQRGCDSGRSLLCSVFQDLIRYGKTKSGLRRPSWLQWFDIPKRCFWHFYFVSLVWNGFLLWILLHLLLQSVPVPEWLQAVLQFLCAGSEPQVLGGELSVVLAFSLLWLHSLRRLLECLFVSIFSNGVIHFVQYCFGLGYYILIGFTILGYCPLDRRTAVSLDDLLMQGNWYHILGLTLYVWASLHQYTCHCILADLRKSASGAIINLKHAVPTGDWFEKVSCPHYFAELLIYLSIAVVFGLLNTIWWLVVLYVLLSQALAAVLCHEFYHEKFDSYPIHRKAFIPLIF.

Residues 1–12 (MQLVQLLPPGVS) lie on the Cytoplasmic side of the membrane. A helical transmembrane segment spans residues 13 to 33 (LLALVWLAVDAAFLTALLLYL). The Lumenal segment spans residues 34-79 (QRGCDSGRSLLCSVFQDLIRYGKTKSGLRRPSWLQWFDIPKRCFWH). A helical membrane pass occupies residues 80-100 (FYFVSLVWNGFLLWILLHLLL). The Cytoplasmic portion of the chain corresponds to 101–122 (QSVPVPEWLQAVLQFLCAGSEP). The helical transmembrane segment at 123 to 143 (QVLGGELSVVLAFSLLWLHSL) threads the bilayer. Residues 144–158 (RRLLECLFVSIFSNG) are Lumenal-facing. Residues 159–179 (VIHFVQYCFGLGYYILIGFTI) traverse the membrane as a helical segment. The Cytoplasmic segment spans residues 180-195 (LGYCPLDRRTAVSLDD). A helical transmembrane segment spans residues 196–216 (LLMQGNWYHILGLTLYVWASL). Residues 217–266 (HQYTCHCILADLRKSASGAIINLKHAVPTGDWFEKVSCPHYFAELLIYLS) lie on the Lumenal side of the membrane. Residues 267–287 (IAVVFGLLNTIWWLVVLYVLL) traverse the membrane as a helical segment. The Cytoplasmic portion of the chain corresponds to 288-319 (SQALAAVLCHEFYHEKFDSYPIHRKAFIPLIF).

Belongs to the steroid 5-alpha reductase family. Polyprenal reductase subfamily.

The protein resides in the endoplasmic reticulum membrane. The enzyme catalyses a di-trans,poly-cis-dolichal + NADP(+) = a di-trans,poly-cis-polyprenal + NADPH + H(+). The catalysed reaction is a 3-oxo-5alpha-steroid + NADP(+) = a 3-oxo-Delta(4)-steroid + NADPH + H(+). It catalyses the reaction androst-4-ene-3,17-dione + NADPH + H(+) = 5alpha-androstan-3,17-dione + NADP(+). It carries out the reaction 17beta-hydroxy-5alpha-androstan-3-one + NADP(+) = testosterone + NADPH + H(+). The protein operates within protein modification; protein glycosylation. Functionally, plays a key role in early steps of protein N-linked glycosylation by being involved in the conversion of polyprenol into dolichol. Acts as a polyprenal reductase that mediates the reduction of polyprenal into dolichal in a NADP-dependent mechanism. Dolichols are required for the synthesis of dolichol-linked monosaccharides and the oligosaccharide precursor used for N-glycosylation. Also able to convert testosterone (T) into 5-alpha-dihydrotestosterone (DHT). The chain is Polyprenal reductase (srd5a3) from Xenopus laevis (African clawed frog).